A 1415-amino-acid chain; its full sequence is G8 domain-containing protein DDB_G0278975 (1415 aa).

The first 24 residues, 1–24, serve as a signal peptide directing secretion; sequence MKINKIILFFFLSCLYLFSSSVSA. 2 helical membrane passes run 107-127 and 138-158; these read INLN…GLFT and LLFI…SIKI. N-linked (GlcNAc...) asparagine glycosylation is found at N245, N366, N428, N466, and N579. The G8 domain occupies 566–692; it reads STWPNGIIPS…YHNTWSKLSA (127 aa). 2 PbH1 repeats span residues 819-841 and 842-864; these read LKNS…TIHG and TNNV…YLED. N844, N985, N1009, N1023, N1099, N1244, and N1342 each carry an N-linked (GlcNAc...) asparagine glycan.

It belongs to the comF family.

The protein resides in the membrane. This is G8 domain-containing protein DDB_G0278975 from Dictyostelium discoideum (Social amoeba).